We begin with the raw amino-acid sequence, 562 residues long: Phosphoglucomutase-1 (562 aa).

An N-acetylmethionine modification is found at Met-1. Lys-16 bears the N6-acetyllysine mark. Arg-23 lines the alpha-D-glucose 1,6-bisphosphate pocket. Thr-115 is subject to Phosphothreonine. Residue Ser-117 coordinates alpha-D-glucose 1,6-bisphosphate. Ser-117 functions as the Phosphoserine intermediate in the catalytic mechanism. Ser-117 serves as a coordination point for Mg(2+). A phosphoserine mark is found at Ser-117 and Ser-134. Thr-185 is subject to Phosphothreonine. 2 positions are modified to phosphoserine: Ser-206 and Ser-213. Residues Asp-288, Asp-290, and Asp-292 each contribute to the Mg(2+) site. Alpha-D-glucose 1,6-bisphosphate is bound by residues Asp-292 and Arg-293. Residue Lys-349 is modified to N6-acetyllysine. Phosphotyrosine is present on Tyr-353. Residue Thr-357 coordinates alpha-D-glucose 1,6-bisphosphate. Ser-369 bears the Phosphoserine mark. Positions 376, 378, and 389 each coordinate alpha-D-glucose 1,6-bisphosphate. At Ser-378 the chain carries Phosphoserine. The residue at position 419 (Lys-419) is an N6-succinyllysine. Thr-467 carries the post-translational modification Phosphothreonine; by PAK1. Phosphoserine occurs at positions 477, 485, and 505. The residue at position 507 (Thr-507) is a Phosphothreonine. Phosphoserine occurs at positions 509 and 541.

The protein belongs to the phosphohexose mutase family. In terms of assembly, monomer. Mg(2+) serves as cofactor. Post-translationally, phosphorylation at Thr-467 by PAK1 significantly enhances enzymatic activity.

Its subcellular location is the cytoplasm. It carries out the reaction alpha-D-glucose 1-phosphate = alpha-D-glucose 6-phosphate. It catalyses the reaction O-phospho-L-seryl-[protein] + alpha-D-glucose 1-phosphate = alpha-D-glucose 1,6-bisphosphate + L-seryl-[protein]. The catalysed reaction is alpha-D-glucose 1,6-bisphosphate + L-seryl-[protein] = O-phospho-L-seryl-[protein] + alpha-D-glucose 6-phosphate. Functionally, catalyzes the reversible isomerization of alpha-D-glucose 1-phosphate to alpha-D-glucose 6-phosphate. The mechanism proceeds via the intermediate compound alpha-D-glucose 1,6-bisphosphate. This enzyme participates in both the breakdown and synthesis of glucose. The protein is Phosphoglucomutase-1 (PGM1) of Macaca fascicularis (Crab-eating macaque).